We begin with the raw amino-acid sequence, 281 residues long: CMT1A duplicated region transcript 15 protein-like protein (281 aa).

Disordered stretches follow at residues 107-131 (KPAWEEPPPERALEVEGAPAKDQPS) and 150-187 (AENVAGERSGREGVTSTAPASRSHAAPSPGHGGKHGGG). Basic and acidic residues predominate over residues 108 to 120 (PAWEEPPPERALE). Low complexity predominate over residues 165–178 (STAPASRSHAAPSP). The helical transmembrane segment at 207 to 227 (AGTTALLLQGLFIVLILVGYI) threads the bilayer.

The protein resides in the membrane. The sequence is that of CMT1A duplicated region transcript 15 protein-like protein (CDRT15L2) from Homo sapiens (Human).